The following is a 112-amino-acid chain: Large ribosomal subunit protein uL1 (112 aa).

Belongs to the universal ribosomal protein uL1 family.

This is Large ribosomal subunit protein uL1 (rpl-10a) from Caenorhabditis remanei (Caenorhabditis vulgaris).